Here is a 422-residue protein sequence, read N- to C-terminus: Trigger factor (422 aa).

A PPIase FKBP-type domain is found at 158-242 (GDFAVVSLES…VKGLRKKELP (85 aa)).

Belongs to the FKBP-type PPIase family. Tig subfamily.

It localises to the cytoplasm. The enzyme catalyses [protein]-peptidylproline (omega=180) = [protein]-peptidylproline (omega=0). Functionally, involved in protein export. Acts as a chaperone by maintaining the newly synthesized protein in an open conformation. Functions as a peptidyl-prolyl cis-trans isomerase. The sequence is that of Trigger factor from Solibacter usitatus (strain Ellin6076).